The primary structure comprises 347 residues: UPF0284 protein M164_0030 (347 aa).

Belongs to the UPF0284 family.

In Saccharolobus islandicus (strain M.16.4 / Kamchatka #3) (Sulfolobus islandicus), this protein is UPF0284 protein M164_0030.